Reading from the N-terminus, the 356-residue chain is Tyrosine recombinase XerS (356 aa).

Residues 16 to 121 (IMPWYVLDYY…ALSSLYKYLT (106 aa)) enclose the Core-binding (CB) domain. Residues 169 to 354 (AFLDYVDKEY…VNDEQKNALD (186 aa)) form the Tyr recombinase domain. Residues Arg210, Lys234, His306, Arg309, and His332 contribute to the active site. Residue Tyr341 is the O-(3'-phospho-DNA)-tyrosine intermediate of the active site.

It belongs to the 'phage' integrase family. XerS subfamily.

The protein localises to the cytoplasm. Its activity is regulated as follows. FtsK is required for recombination. Its function is as follows. Site-specific tyrosine recombinase, which acts by catalyzing the cutting and rejoining of the recombining DNA molecules. Essential to convert dimers of the bacterial chromosome into monomers to permit their segregation at cell division. The sequence is that of Tyrosine recombinase XerS from Streptococcus equi subsp. zooepidemicus (strain H70).